Reading from the N-terminus, the 352-residue chain is Anthranilate phosphoribosyltransferase (352 aa).

5-phospho-alpha-D-ribose 1-diphosphate contacts are provided by residues G83, 86-87 (GD), T91, 93-96 (NIST), 111-119 (KHGGRSVSS), and A123. G83 serves as a coordination point for anthranilate. S95 serves as a coordination point for Mg(2+). R169 is a binding site for anthranilate. D228 and E229 together coordinate Mg(2+).

This sequence belongs to the anthranilate phosphoribosyltransferase family. Homodimer. Requires Mg(2+) as cofactor.

The catalysed reaction is N-(5-phospho-beta-D-ribosyl)anthranilate + diphosphate = 5-phospho-alpha-D-ribose 1-diphosphate + anthranilate. The protein operates within amino-acid biosynthesis; L-tryptophan biosynthesis; L-tryptophan from chorismate: step 2/5. Its function is as follows. Catalyzes the transfer of the phosphoribosyl group of 5-phosphorylribose-1-pyrophosphate (PRPP) to anthranilate to yield N-(5'-phosphoribosyl)-anthranilate (PRA). In Neisseria meningitidis serogroup A / serotype 4A (strain DSM 15465 / Z2491), this protein is Anthranilate phosphoribosyltransferase.